A 362-amino-acid chain; its full sequence is Ferredoxin--NADP reductase, leaf isozyme 1, chloroplastic (362 aa).

The transit peptide at 1–36 directs the protein to the chloroplast; it reads MAAVTAAAVSTSAAAAVTKASPSPAHCFLPCPPRTR. The FAD-binding FR-type domain occupies 83–205; the sequence is KEPYVGKCLL…TGPVGKEMLM (123 aa). FAD contacts are provided by residues 141–144, 162–164, Tyr-168, 179–181, and Thr-220; these read RLYS, CVK, and VCS. The NADP(+) site is built by Ser-144 and Lys-164. Residues Cys-180 and Cys-185 are joined by a disulfide bond. Phosphoserine is present on Ser-181. NADP(+)-binding positions include Thr-220, 252 to 253, 282 to 283, Lys-292, 321 to 322, and Glu-360; these read VP, SR, and GL.

It belongs to the ferredoxin--NADP reductase type 1 family. Heterodimer with LFNR2. Component of high molecular weight thylakoid LFNRs-containing protein complexes containing LIR1, LFNR1, LFNR2, TIC62 and TROL proteins. Interacts directly with LFNR1 and LFNR2; LIR1 increases the affinity of LFNR1 and LFNR2 for TIC62 and subsequent thylakoid relocalization. It depends on FAD as a cofactor. Post-translationally, may form interchain disulfide bonds with LIR1.

The protein resides in the plastid. The protein localises to the chloroplast stroma. It localises to the chloroplast thylakoid membrane. The catalysed reaction is 2 reduced [2Fe-2S]-[ferredoxin] + NADP(+) + H(+) = 2 oxidized [2Fe-2S]-[ferredoxin] + NADPH. The protein operates within energy metabolism; photosynthesis. Its function is as follows. Plays a key role in regulating the relative amounts of cyclic and non-cyclic electron flow to meet the demands of the plant for ATP and reducing power. The protein is Ferredoxin--NADP reductase, leaf isozyme 1, chloroplastic of Oryza sativa subsp. indica (Rice).